A 256-amino-acid chain; its full sequence is Imidazole glycerol phosphate synthase subunit HisF (256 aa).

Active-site residues include Asp13 and Asp132.

Belongs to the HisA/HisF family. As to quaternary structure, heterodimer of HisH and HisF.

Its subcellular location is the cytoplasm. The enzyme catalyses 5-[(5-phospho-1-deoxy-D-ribulos-1-ylimino)methylamino]-1-(5-phospho-beta-D-ribosyl)imidazole-4-carboxamide + L-glutamine = D-erythro-1-(imidazol-4-yl)glycerol 3-phosphate + 5-amino-1-(5-phospho-beta-D-ribosyl)imidazole-4-carboxamide + L-glutamate + H(+). Its pathway is amino-acid biosynthesis; L-histidine biosynthesis; L-histidine from 5-phospho-alpha-D-ribose 1-diphosphate: step 5/9. Functionally, IGPS catalyzes the conversion of PRFAR and glutamine to IGP, AICAR and glutamate. The HisF subunit catalyzes the cyclization activity that produces IGP and AICAR from PRFAR using the ammonia provided by the HisH subunit. The polypeptide is Imidazole glycerol phosphate synthase subunit HisF (Leptospira interrogans serogroup Icterohaemorrhagiae serovar copenhageni (strain Fiocruz L1-130)).